A 215-amino-acid polypeptide reads, in one-letter code: Cytochrome b6 (215 aa).

Residues isoleucine 32 to phenylalanine 52 form a helical membrane-spanning segment. Cysteine 35 is a binding site for heme c. Residues histidine 86 and histidine 100 each contribute to the heme b site. The next 3 helical transmembrane spans lie at alanine 90–phenylalanine 110, leucine 116–tyrosine 136, and leucine 186–isoleucine 206. 2 residues coordinate heme b: histidine 187 and histidine 202.

The protein belongs to the cytochrome b family. PetB subfamily. In terms of assembly, the 4 large subunits of the cytochrome b6-f complex are cytochrome b6, subunit IV (17 kDa polypeptide, PetD), cytochrome f and the Rieske protein, while the 4 small subunits are PetG, PetL, PetM and PetN. The complex functions as a dimer. Heme b is required as a cofactor. Heme c serves as cofactor.

It localises to the plastid. It is found in the chloroplast thylakoid membrane. Component of the cytochrome b6-f complex, which mediates electron transfer between photosystem II (PSII) and photosystem I (PSI), cyclic electron flow around PSI, and state transitions. The protein is Cytochrome b6 of Tupiella akineta (Green alga).